Here is a 299-residue protein sequence, read N- to C-terminus: UTP--glucose-1-phosphate uridylyltransferase 1 (299 aa).

The protein belongs to the UDPGP type 2 family.

It catalyses the reaction alpha-D-glucose 1-phosphate + UTP + H(+) = UDP-alpha-D-glucose + diphosphate. It participates in carbohydrate metabolism; nucleotide-sugar metabolism. The sequence is that of UTP--glucose-1-phosphate uridylyltransferase 1 (hasC1) from Streptococcus pyogenes serotype M6 (strain ATCC BAA-946 / MGAS10394).